A 295-amino-acid chain; its full sequence is Pyridoxal 5'-phosphate synthase subunit PdxS (295 aa).

A D-ribose 5-phosphate-binding site is contributed by Asp25. Lys82 functions as the Schiff-base intermediate with D-ribose 5-phosphate in the catalytic mechanism. Gly154 is a binding site for D-ribose 5-phosphate. Residue Arg166 participates in D-glyceraldehyde 3-phosphate binding. D-ribose 5-phosphate is bound by residues Gly215 and 236 to 237; that span reads GS.

It belongs to the PdxS/SNZ family. As to quaternary structure, in the presence of PdxT, forms a dodecamer of heterodimers.

It catalyses the reaction aldehydo-D-ribose 5-phosphate + D-glyceraldehyde 3-phosphate + L-glutamine = pyridoxal 5'-phosphate + L-glutamate + phosphate + 3 H2O + H(+). Its pathway is cofactor biosynthesis; pyridoxal 5'-phosphate biosynthesis. In terms of biological role, catalyzes the formation of pyridoxal 5'-phosphate from ribose 5-phosphate (RBP), glyceraldehyde 3-phosphate (G3P) and ammonia. The ammonia is provided by the PdxT subunit. Can also use ribulose 5-phosphate and dihydroxyacetone phosphate as substrates, resulting from enzyme-catalyzed isomerization of RBP and G3P, respectively. The chain is Pyridoxal 5'-phosphate synthase subunit PdxS from Bacillus mycoides (strain KBAB4) (Bacillus weihenstephanensis).